We begin with the raw amino-acid sequence, 1170 residues long: Chromosome partition protein Smc (1170 aa).

An ATP-binding site is contributed by 32–39 (PNGCGKSN). 3 coiled-coil regions span residues 169-215 (GVSK…AVVA), 245-365 (DRQR…DAAA), and 401-508 (EAAH…TQGK). Residues 520–623 (ALPRLWKKLH…VADDLAQALA (104 aa)) form the SMC hinge domain. Coiled coils occupy residues 664–944 (QEIE…KEKL) and 983–1020 (ERKV…LQAT).

It belongs to the SMC family. Homodimer.

It is found in the cytoplasm. Required for chromosome condensation and partitioning. This Burkholderia pseudomallei (strain 1710b) protein is Chromosome partition protein Smc.